The sequence spans 245 residues: 1-(5-phosphoribosyl)-5-[(5-phosphoribosylamino)methylideneamino] imidazole-4-carboxamide isomerase (245 aa).

D7 (proton acceptor) is an active-site residue. D129 functions as the Proton donor in the catalytic mechanism.

Belongs to the HisA/HisF family.

It localises to the cytoplasm. It catalyses the reaction 1-(5-phospho-beta-D-ribosyl)-5-[(5-phospho-beta-D-ribosylamino)methylideneamino]imidazole-4-carboxamide = 5-[(5-phospho-1-deoxy-D-ribulos-1-ylimino)methylamino]-1-(5-phospho-beta-D-ribosyl)imidazole-4-carboxamide. It participates in amino-acid biosynthesis; L-histidine biosynthesis; L-histidine from 5-phospho-alpha-D-ribose 1-diphosphate: step 4/9. The polypeptide is 1-(5-phosphoribosyl)-5-[(5-phosphoribosylamino)methylideneamino] imidazole-4-carboxamide isomerase (Vibrio vulnificus (strain CMCP6)).